Here is a 329-residue protein sequence, read N- to C-terminus: Probable quinone oxidoreductase (329 aa).

S191 is modified (phosphoserine).

The protein belongs to the zinc-containing alcohol dehydrogenase family. Quinone oxidoreductase subfamily.

Its subcellular location is the cytoplasm. It localises to the nucleus. It carries out the reaction 2 a quinone + NADPH + H(+) = 2 a 1,4-benzosemiquinone + NADP(+). The sequence is that of Probable quinone oxidoreductase (zta1) from Schizosaccharomyces pombe (strain 972 / ATCC 24843) (Fission yeast).